Here is a 450-residue protein sequence, read N- to C-terminus: tRNA-aminoacylation cofactor arc1 (450 aa).

The tract at residues 208–278 (QRPSVIKKDK…KEPPKAATPV (71 aa)) is disordered. 2 stretches are compositionally biased toward basic and acidic residues: residues 213–225 (IKKD…EGKP) and 233–247 (SVEK…AKKE). The span at 248-261 (KQNKKEKKDKKDKK) shows a compositional bias: basic residues. Basic and acidic residues predominate over residues 262-272 (DKKEKAPKEPP). A tRNA-binding domain is found at 278–382 (VPSMIDFRIG…ENAEIGDRLT (105 aa)).

It belongs to the tRNA-aminoacylation cofactor ARC1 family. In terms of assembly, component of a yeast aminoacyl-tRNA synthase (aaRS) complex formed by methionyl-tRNA synthase, glutamyl-tRNA synthase and the tRNA aminoacylation cofactor arc1 in a stoichiometric complex. Interacts with rar1/mes1 and gus1.

It localises to the cytoplasm. In terms of biological role, binds to tRNA and functions as a cofactor for the methionyl-tRNA synthetase (MetRS) and glutamyl-tRNA synthetase (GluRS). Forms a complex with MetRS and GluRS and increases their affinity for cognate tRNAs due to the presence of a tRNA binding domain in its middle and C-terminal part. The protein is tRNA-aminoacylation cofactor arc1 of Schizosaccharomyces pombe (strain 972 / ATCC 24843) (Fission yeast).